The following is a 141-amino-acid chain: Transcription antitermination protein NusB (141 aa).

Belongs to the NusB family.

Its function is as follows. Involved in transcription antitermination. Required for transcription of ribosomal RNA (rRNA) genes. Binds specifically to the boxA antiterminator sequence of the ribosomal RNA (rrn) operons. This is Transcription antitermination protein NusB from Fervidobacterium nodosum (strain ATCC 35602 / DSM 5306 / Rt17-B1).